The primary structure comprises 118 residues: Holo-[acyl-carrier-protein] synthase (118 aa).

Mg(2+)-binding residues include Asp8 and Glu58.

This sequence belongs to the P-Pant transferase superfamily. AcpS family. It depends on Mg(2+) as a cofactor.

It localises to the cytoplasm. It catalyses the reaction apo-[ACP] + CoA = holo-[ACP] + adenosine 3',5'-bisphosphate + H(+). In terms of biological role, transfers the 4'-phosphopantetheine moiety from coenzyme A to a Ser of acyl-carrier-protein. This chain is Holo-[acyl-carrier-protein] synthase, found in Streptococcus pyogenes serotype M12 (strain MGAS2096).